The chain runs to 359 residues: tRNA-specific 2-thiouridylase MnmA (359 aa).

Residues glycine 9–serine 16 and methionine 35 each bind ATP. The interaction with target base in tRNA stretch occupies residues asparagine 95 to aspartate 97. The Nucleophile role is filled by cysteine 100. An intrachain disulfide couples cysteine 100 to cysteine 197. Glycine 124 contacts ATP. Residues lysine 147 to glutamine 149 form an interaction with tRNA region. The Cysteine persulfide intermediate role is filled by cysteine 197. Positions arginine 309–tyrosine 310 are interaction with tRNA.

The protein belongs to the MnmA/TRMU family.

It is found in the cytoplasm. The catalysed reaction is S-sulfanyl-L-cysteinyl-[protein] + uridine(34) in tRNA + AH2 + ATP = 2-thiouridine(34) in tRNA + L-cysteinyl-[protein] + A + AMP + diphosphate + H(+). Catalyzes the 2-thiolation of uridine at the wobble position (U34) of tRNA, leading to the formation of s(2)U34. The polypeptide is tRNA-specific 2-thiouridylase MnmA (Francisella tularensis subsp. novicida (strain U112)).